The following is a 459-amino-acid chain: Proton-coupled folate transporter (459 aa).

Met-1 carries the N-acetylmethionine modification. Residues 1 to 25 (MEGRANSPGEPRAWPTRSVLCRGCV) lie on the Cytoplasmic side of the membrane. A helical transmembrane segment spans residues 26-44 (EPLVFLANFALVLQGPVTT). The Extracellular segment spans residues 45–82 (QYLWHRFSADLGYNGTRHRDSCSNHSVDPIAQEVETLT). Asn-58 and Asn-68 each carry an N-linked (GlcNAc...) asparagine glycan. A disulfide bridge links Cys-66 with Cys-298. Residues 83-108 (SHWTLYMNVGGFLVGLFSSTLLGAWS) traverse the membrane as a helical segment. At 109–112 (DCVG) the chain is on the cytoplasmic side. The chain crosses the membrane as a helical span at residues 113-135 (RRPLLVLASLGLLLQTVLSIFVV). Residues 136 to 140 (QLHLH) are Extracellular-facing. The chain crosses the membrane as a helical span at residues 141 to 154 (IGYLVLGRILCALL). Residues 155 to 177 (GDFSGLLAASFASVADVSSSRTR) are Cytoplasmic-facing. H(+) is bound by residues Asp-156 and Glu-185. A helical transmembrane segment spans residues 178 to 203 (TIRMALLEACIGVAGMLASFIGGFLL). The Extracellular segment spans residues 204-208 (QEQVY). Residues 209-227 (VNPFWLALAVLTVMTLYAA) form a helical membrane-spanning segment. The Cytoplasmic portion of the chain corresponds to 228 to 266 (FCFGETVKERTPTRLFTLRHHRSVIQLYVTQAPEKSRKH). Residues 267–289 (LALYSLAIFVMITVHLGAQDILT) form a helical membrane-spanning segment. Position 281 (His-281) interacts with H(+). The Extracellular portion of the chain corresponds to 290–302 (LYELSAPLCWDSR). A helical transmembrane segment spans residues 303-325 (LISYGSAAQQLPYLTSLLGLRLL). Residues 326–331 (QYCLAD) lie on the Cytoplasmic side of the membrane. Residues 332–351 (TWVAEIGLVFNILGMMVFAF) traverse the membrane as a helical segment. At 352-355 (ATIT) the chain is on the extracellular side. Residues 356 to 376 (PLMFTGYGLLFLSLVVTPIIR) form a helical membrane-spanning segment. Residues 377–388 (AKLSRLVRQSEQ) lie on the Cytoplasmic side of the membrane. Residues 389–414 (GALFSALACVNGLAMLMASGIFNSLY) traverse the membrane as a helical segment. Residues 415-422 (PATLNLMK) lie on the Extracellular side of the membrane. Residues 423–441 (GFPFLLAAGLLFIPAILMG) form a helical membrane-spanning segment. Residues 442-459 (ILERDNHCPEFQEFSQSP) lie on the Cytoplasmic side of the membrane. Phosphoserine is present on Ser-458.

The protein belongs to the major facilitator superfamily. SLC46A family. As to quaternary structure, monomer. In terms of tissue distribution, expressed in retina and retinal pigment epithelium.

It localises to the cell membrane. It is found in the apical cell membrane. The protein localises to the basolateral cell membrane. The protein resides in the endosome membrane. Its subcellular location is the cytoplasm. The enzyme catalyses folate(in) + H(+)(in) = folate(out) + H(+)(out). It carries out the reaction (6S)-5-methyl-5,6,7,8-tetrahydrofolate(in) + H(+)(in) = (6S)-5-methyl-5,6,7,8-tetrahydrofolate(out) + H(+)(out). The catalysed reaction is methotrexate(in) + H(+)(in) = methotrexate(out) + H(+)(out). It catalyses the reaction pemetrexed(in) + H(+)(in) = pemetrexed(out) + H(+)(out). Proton-coupled folate symporter that mediates folate absorption using an H(+) gradient as a driving force. Involved in the intestinal absorption of folates at the brush-border membrane of the proximal jejunum, and the transport from blood to cerebrospinal fluid across the choroid plexus. Functions at acidic pH via alternate outward- and inward-open conformation states. Protonation of residues in the outward open state primes the protein for transport. Binding of folate promotes breaking of salt bridge network and subsequent closure of the extracellular gate, leading to the inward-open state and release of protons and folate. Also able to transport antifolate drugs, such as methotrexate and pemetrexed. Involved in FOLR1-mediated endocytosis by serving as a route of export of folates from acidified endosomes. Also acts as a lower-affinity, pH-independent heme carrier protein and constitutes the main importer of heme in the intestine. Imports heme in the retina and retinal pigment epithelium, in neurons of the hippocampus, in hepatocytes and in the renal epithelial cells. Hence, participates in the trafficking of heme and increases intracellular iron content. This Bos taurus (Bovine) protein is Proton-coupled folate transporter.